We begin with the raw amino-acid sequence, 139 residues long: Putative pre-16S rRNA nuclease (139 aa).

It belongs to the YqgF nuclease family.

The protein localises to the cytoplasm. In terms of biological role, could be a nuclease involved in processing of the 5'-end of pre-16S rRNA. In Streptococcus thermophilus (strain CNRZ 1066), this protein is Putative pre-16S rRNA nuclease.